The primary structure comprises 125 residues: SOSS complex subunit C homolog (125 aa).

The interval 43-77 is disordered; that stretch reads MPSPQLLGQPTVAPEFLPQGVGLPTNATPPRSAFN. The segment covering 67-77 has biased composition (polar residues); the sequence is TNATPPRSAFN.

The protein belongs to the SOSS-C family.

The chain is SOSS complex subunit C homolog from Drosophila persimilis (Fruit fly).